The following is a 345-amino-acid chain: Sesquiterpene synthase GALMADRAFT_104215 (345 aa).

Mg(2+) contacts are provided by D91, N226, S230, and E234. The DDXXD motif motif lies at 91–95; that stretch reads DEFTD. 2 residues coordinate (2E,6E)-farnesyl diphosphate: R316 and Y317.

Belongs to the terpene synthase family. It depends on Mg(2+) as a cofactor.

The catalysed reaction is (2E,6E)-farnesyl diphosphate = beta-gurjunene + diphosphate. In terms of biological role, terpene cyclase that catalyzes the cyclization of farnesyl diphosphate (FPP) to beta-gurjunene. The sequence is that of Sesquiterpene synthase GALMADRAFT_104215 from Galerina marginata (strain CBS 339.88).